We begin with the raw amino-acid sequence, 790 residues long: Endonuclease MutS2 (790 aa).

G334–T341 is an ATP binding site. One can recognise a Smr domain in the interval L713 to H788.

This sequence belongs to the DNA mismatch repair MutS family. MutS2 subfamily. In terms of assembly, homodimer. Binds to stalled ribosomes, contacting rRNA.

In terms of biological role, endonuclease that is involved in the suppression of homologous recombination and thus may have a key role in the control of bacterial genetic diversity. Its function is as follows. Acts as a ribosome collision sensor, splitting the ribosome into its 2 subunits. Detects stalled/collided 70S ribosomes which it binds and splits by an ATP-hydrolysis driven conformational change. Acts upstream of the ribosome quality control system (RQC), a ribosome-associated complex that mediates the extraction of incompletely synthesized nascent chains from stalled ribosomes and their subsequent degradation. Probably generates substrates for RQC. The sequence is that of Endonuclease MutS2 from Caldanaerobacter subterraneus subsp. tengcongensis (strain DSM 15242 / JCM 11007 / NBRC 100824 / MB4) (Thermoanaerobacter tengcongensis).